Here is a 201-residue protein sequence, read N- to C-terminus: Dephospho-CoA kinase (201 aa).

One can recognise a DPCK domain in the interval 4-201 (SVGLTGNIAS…KYLREAKIKQ (198 aa)). ATP is bound at residue 12–17 (ASGKST).

The protein belongs to the CoaE family.

Its subcellular location is the cytoplasm. It carries out the reaction 3'-dephospho-CoA + ATP = ADP + CoA + H(+). It functions in the pathway cofactor biosynthesis; coenzyme A biosynthesis; CoA from (R)-pantothenate: step 5/5. Catalyzes the phosphorylation of the 3'-hydroxyl group of dephosphocoenzyme A to form coenzyme A. The chain is Dephospho-CoA kinase from Legionella pneumophila subsp. pneumophila (strain Philadelphia 1 / ATCC 33152 / DSM 7513).